The chain runs to 534 residues: Serine protease vicPa (534 aa).

The first 17 residues, 1–17 (MLCYLLIHILCLQAVLG), serve as a signal peptide directing secretion. N-linked (GlcNAc...) asparagine glycans are attached at residues Asn-65 and Asn-126. The active-site Charge relay system is the Ser-174. Asn-297, Asn-416, and Asn-436 each carry an N-linked (GlcNAc...) asparagine glycan. Asp-450 functions as the Charge relay system in the catalytic mechanism.

It belongs to the peptidase S28 family.

The protein operates within mycotoxin biosynthesis. Serine protease, part of the gene cluster that mediates the biosynthesis of the secondary metabolite victorin, the molecular basis for Victoria blight of oats. Within the pathway, vicPa and vicPb are probably involved in the processing of the vicA1 and vicA2 precursors. The pathway starts with the processing of the precursor vicA1 by several endopeptidases including kexin proteases as well as the cluster-specific S28 family peptidases vicPa and vicPb to produce 7 identical copies of the hexapeptide Gly-Leu-Lys-Leu-Ala-Phe. After being excised from the precursor peptide, the core peptides are cyclized and modified post-translationally by enzymes encoded within the gene cluster. The ustYa family oxidase vicYb is required for the formation of the macrocycle in victorin and the copper amine oxidases (CAOs) vicK1 and vicK2 are responsible for converting victorin to the active form by oxidizing the N-terminal glycyl residue in the peptides to glyoxylate. Relaxed substrate specificity of enzymes in the victorin biosynthetic pathway results in a metabolic grid that produces a set of analogs including victorinines B, C, E or HV-toxin M. This chain is Serine protease vicPa, found in Bipolaris victoriae (strain FI3) (Victoria blight of oats agent).